A 544-amino-acid chain; its full sequence is Probable protein kinase UbiB (544 aa).

Positions 123–501 constitute a Protein kinase domain; it reads DFDIKPLASA…KRQQAKGQFL (379 aa). Residues 129-137 and Lys152 contribute to the ATP site; that span reads LASASIAQV. The Proton acceptor role is filled by Asp287. Residues 515–537 form a helical membrane-spanning segment; that stretch reads LLTSNITVLASISAATGAAFWLF.

The protein belongs to the ABC1 family. UbiB subfamily.

Its subcellular location is the cell inner membrane. Its pathway is cofactor biosynthesis; ubiquinone biosynthesis [regulation]. Its function is as follows. Is probably a protein kinase regulator of UbiI activity which is involved in aerobic coenzyme Q (ubiquinone) biosynthesis. The chain is Probable protein kinase UbiB from Aliivibrio fischeri (strain MJ11) (Vibrio fischeri).